The sequence spans 61 residues: uncharacterized protein (61 aa).

Residues 1–20 are Extracellular-facing; that stretch reads MSSTTSTINLSSLGSAINDV. Residues 21–41 form a helical membrane-spanning segment; sequence LNIIVQYLPVFVTVAVLFGII. The Cytoplasmic segment spans residues 42-61; it reads TYMTGGLGGLFSGITGIFGS.

It is found in the host membrane. This is an uncharacterized protein from Acidianus filamentous virus 2 (isolate Italy/Pozzuoli) (AFV-2).